We begin with the raw amino-acid sequence, 54 residues long: Ovomucoid (54 aa).

One can recognise a Kazal-like domain in the interval V4–C54. 3 disulfides stabilise this stretch: C6/C36, C14/C33, and C22/C54. N-linked (GlcNAc...) asparagine glycosylation occurs at N43.

It localises to the secreted. The chain is Ovomucoid from Dendrocygna arcuata (Wandering whistling-duck).